The following is a 421-amino-acid chain: Core-capsid bridging protein (421 aa).

It belongs to the adenoviridae core-capsid bridging protein family. Monomer. Homodimer. Exists in equilibrium between monomers and dimers in solution. Interacts with the histone-like nucleoprotein; this interactions bridge the virus core to the capsid. Interacts with core protein X; this interactions bridge the virus core to the capsid. Interacts with the endosome lysis protein VI; this interactions bridge the virus core to the capsid. Interacts with the peripentonal hexons. Interacts with host NPM1; this interaction might play a role in virus assembly.

Its subcellular location is the virion. The protein localises to the host nucleus. It localises to the host nucleolus. Its function is as follows. Associates loosely with the viral DNA to form an outer shell around the nucleoprotein-DNA complex and links it with the capsid by binding the endosome lysis protein. Dissociates from the viral genome during entry. Might be involved in nuclear capsid assembly of the viral particles through its association with NPM1/nucleophosmin. This chain is Core-capsid bridging protein, found in Canine adenovirus serotype 1 (strain RI261) (CAdV-1).